A 164-amino-acid chain; its full sequence is SsrA-binding protein (164 aa).

The protein belongs to the SmpB family.

The protein localises to the cytoplasm. In terms of biological role, required for rescue of stalled ribosomes mediated by trans-translation. Binds to transfer-messenger RNA (tmRNA), required for stable association of tmRNA with ribosomes. tmRNA and SmpB together mimic tRNA shape, replacing the anticodon stem-loop with SmpB. tmRNA is encoded by the ssrA gene; the 2 termini fold to resemble tRNA(Ala) and it encodes a 'tag peptide', a short internal open reading frame. During trans-translation Ala-aminoacylated tmRNA acts like a tRNA, entering the A-site of stalled ribosomes, displacing the stalled mRNA. The ribosome then switches to translate the ORF on the tmRNA; the nascent peptide is terminated with the 'tag peptide' encoded by the tmRNA and targeted for degradation. The ribosome is freed to recommence translation, which seems to be the essential function of trans-translation. The chain is SsrA-binding protein from Gluconobacter oxydans (strain 621H) (Gluconobacter suboxydans).